We begin with the raw amino-acid sequence, 357 residues long: Homoserine O-acetyltransferase (357 aa).

The AB hydrolase-1 domain maps to 51–340 (NVIVICHALT…EPYGHDAFLI (290 aa)). Residue Ser147 is the Nucleophile of the active site. A substrate-binding site is contributed by Arg216. Residues Asp306 and His335 contribute to the active site. Asp336 provides a ligand contact to substrate.

It belongs to the AB hydrolase superfamily. MetX family. As to quaternary structure, homodimer.

The protein resides in the cytoplasm. It catalyses the reaction L-homoserine + acetyl-CoA = O-acetyl-L-homoserine + CoA. Its pathway is amino-acid biosynthesis; L-methionine biosynthesis via de novo pathway; O-acetyl-L-homoserine from L-homoserine: step 1/1. Its function is as follows. Transfers an acetyl group from acetyl-CoA to L-homoserine, forming acetyl-L-homoserine. The chain is Homoserine O-acetyltransferase from Chlorobium chlorochromatii (strain CaD3).